We begin with the raw amino-acid sequence, 254 residues long: Alcohol dehydrogenase 1 (254 aa).

10 to 33 (FVAGLGGIGLDTSREIVKSGPKNL) contacts NAD(+). Serine 138 contacts substrate. Catalysis depends on tyrosine 151, which acts as the Proton acceptor.

It belongs to the short-chain dehydrogenases/reductases (SDR) family. As to quaternary structure, homodimer.

The enzyme catalyses a primary alcohol + NAD(+) = an aldehyde + NADH + H(+). The catalysed reaction is a secondary alcohol + NAD(+) = a ketone + NADH + H(+). The polypeptide is Alcohol dehydrogenase 1 (Adh1) (Drosophila hydei (Fruit fly)).